The sequence spans 886 residues: Alanine--tRNA ligase (886 aa).

Residues H564, H568, C676, and H680 each contribute to the Zn(2+) site.

Belongs to the class-II aminoacyl-tRNA synthetase family. Zn(2+) is required as a cofactor.

The protein resides in the cytoplasm. The catalysed reaction is tRNA(Ala) + L-alanine + ATP = L-alanyl-tRNA(Ala) + AMP + diphosphate. Catalyzes the attachment of alanine to tRNA(Ala) in a two-step reaction: alanine is first activated by ATP to form Ala-AMP and then transferred to the acceptor end of tRNA(Ala). Also edits incorrectly charged Ser-tRNA(Ala) and Gly-tRNA(Ala) via its editing domain. The chain is Alanine--tRNA ligase from Bartonella bacilliformis.